We begin with the raw amino-acid sequence, 1205 residues long: Centrosome and spindle pole associated protein 1 (1205 aa).

2 coiled-coil regions span residues Gln12–Gly34 and Lys87–Lys108. The interval Leu16–Ser37 is disordered. Residues Ser158–Ser173 show a composition bias toward basic and acidic residues. Disordered stretches follow at residues Ser158–Leu187, Ser222–Ser277, and Gln380–Leu467. The segment covering Asn176–Leu187 has biased composition (polar residues). Basic and acidic residues-rich tracts occupy residues Ser222–Val233 and Ala257–Gly275. Residues Glu357 to Ala391 are a coiled coil. 2 stretches are compositionally biased toward basic and acidic residues: residues Asp401–Lys410 and Arg417–Arg428. Ser405 is subject to Phosphoserine. The segment covering Thr433–Pro447 has biased composition (pro residues). Residues Ser574–Asn618 are a coiled coil. The tract at residues Ala677–Phe704 is disordered. A compositionally biased stretch (polar residues) spans Asn685–Pro697. Residues Arg724–Tyr813 are a coiled coil. A phosphoserine mark is found at Ser850 and Ser869. Residues Ser862–Ala881 are disordered. The stretch at Ala874–Leu911 forms a coiled coil. Phosphoserine is present on Ser915. Residues Gln993–Ala1014 are a coiled coil. 3 disordered regions span residues Gly1086–Ser1105, Arg1124–Thr1169, and Asn1182–Ala1205. Residues Arg1124–Asn1134 are compositionally biased toward basic and acidic residues. Acidic residues predominate over residues Thr1135 to Asp1145. Residues Asp1146–Arg1156 are compositionally biased toward basic and acidic residues.

Interacts with PLEKHG6. Interacts with ARMC9, TOGARAM1, CCDC66, CEP104 and CEP290. Phosphorylated. Phosphorylation increases in colcemide-treated cells.

It localises to the cytoplasm. It is found in the cytoskeleton. The protein localises to the microtubule organizing center. Its subcellular location is the centrosome. The protein resides in the spindle. It localises to the spindle pole. It is found in the cell projection. The protein localises to the cilium. May play a role in cell-cycle-dependent microtubule organization. This chain is Centrosome and spindle pole associated protein 1 (Cspp1), found in Mus musculus (Mouse).